Reading from the N-terminus, the 218-residue chain is Ribose-5-phosphate isomerase A (218 aa).

Substrate-binding positions include 28–31, 81–84, and 94–97; these read TGST, DGAD, and KGGG. The active-site Proton acceptor is Glu-103. Lys-121 is a binding site for substrate.

It belongs to the ribose 5-phosphate isomerase family. In terms of assembly, homodimer.

It carries out the reaction aldehydo-D-ribose 5-phosphate = D-ribulose 5-phosphate. It functions in the pathway carbohydrate degradation; pentose phosphate pathway; D-ribose 5-phosphate from D-ribulose 5-phosphate (non-oxidative stage): step 1/1. Catalyzes the reversible conversion of ribose-5-phosphate to ribulose 5-phosphate. The polypeptide is Ribose-5-phosphate isomerase A (Shewanella piezotolerans (strain WP3 / JCM 13877)).